Reading from the N-terminus, the 2431-residue chain is Histone-lysine N-methyltransferase trr (2431 aa).

Disordered stretches follow at residues 34–78 (LQKR…STAP), 135–201 (DADK…ENSG), 213–235 (ASGA…AGTP), and 759–789 (QSAN…TPMN). The span at 142–165 (YRISTPRNSQSNPLLHRNTAFTSF) shows a compositional bias: polar residues. 3 stretches are compositionally biased toward low complexity: residues 171 to 183 (ASSS…STAS), 218 to 235 (SSTS…AGTP), and 767 to 787 (ATST…NATP). Residues 801-805 (LKQLL) carry the LXXLL motif 1 motif. Disordered stretches follow at residues 863–895 (PVPT…GGSS), 918–973 (VGGE…QVKQ), 1226–1292 (HPQQ…AGGA), 1404–1433 (TSGG…KGGS), and 1478–1500 (GLVG…AEKM). Composition is skewed to low complexity over residues 866–895 (TATQ…GGSS), 952–970 (QQQQ…SPHQ), and 1226–1241 (HPQQ…QPQN). The span at 1269–1281 (RKRRKREVQKPRR) shows a compositional bias: basic residues. Low complexity predominate over residues 1410-1422 (PASMSSAASAGSS). A compositionally biased stretch (gly residues) spans 1423–1433 (SAGGGKLKGGS). Thr-1486 carries the post-translational modification Phosphothreonine. Phosphoserine is present on residues Ser-1488 and Ser-1490. The LXXLL motif 2 signature appears at 1652–1656 (LANLL). Residues 1790 to 1836 (GGSAVKSSNGDSPGSFCASSTAPAEMVVKQEPEDEDEKTPSVPGNPT) form a disordered region. Residues 1794 to 1811 (VKSSNGDSPGSFCASSTA) show a composition bias toward polar residues. The C2HC pre-PHD-type zinc-finger motif lies at 1895–1935 (TRQCVFCNQRGDGQADGPSRLLNFDVDKWVHLNCALWSNGV). The PHD-type zinc finger occupies 1956–2003 (QACSACHQPGATIKCFKSRCNSLYHLPCAIREECVFYKNKSVHCSVHG). Positions 2060 to 2064 (LSNLL) match the LXXLL motif 3 motif. The FYR N-terminal domain maps to 2061-2121 (SNLLRVGNMT…CRYICSIAEA (61 aa)). In terms of domain architecture, FYR C-terminal spans 2122-2209 (GCKPEFRIQV…ETLTDYRFKY (88 aa)). In terms of domain architecture, SET spans 2291 to 2407 (NNVYLARSKI…RGEELSYDYK (117 aa)). One can recognise a Post-SET domain in the interval 2415–2431 (HKIPCACGAPNCRKWMN).

The protein belongs to the class V-like SAM-binding methyltransferase superfamily. Histone-lysine methyltransferase family. TRX/MLL subfamily. In terms of assembly, component of the MLL3/4 complex composed at least of the catalytic subunit trr, ash2, Rbbp5, Dpy-30L1, wds, hcf, ptip, Pa1, Utx, Lpt and Ncoa6. Interacts with nuclear receptor EcR in an ecdysone-dependent manner. Interacts with ash2; the interaction stabilizes trr. Widely expressed.

Its subcellular location is the nucleus. It localises to the chromosome. It catalyses the reaction L-lysyl(4)-[histone H3] + 3 S-adenosyl-L-methionine = N(6),N(6),N(6)-trimethyl-L-lysyl(4)-[histone H3] + 3 S-adenosyl-L-homocysteine + 3 H(+). Functionally, histone methyltransferase that acts as a coactivator for the ecdysone receptor during development. Specifically trimethylates 'Lys-4' of histone H3, a specific tag for epigenetic transcriptional activation. Recruited by EcR in an ecdysone-dependent manner causing H3 'Lys-4' trimethylation at ecdysone-inducible promoters, leading to activate expression. Plays a central role in the developing compound eye, during the progression of the morphogenetic furrow and in post-furrow differentiation of the retinal epithelium, notably by activating expression of hh. Also required for wing and abdominal development. The protein is Histone-lysine N-methyltransferase trr (trr) of Drosophila melanogaster (Fruit fly).